The following is a 558-amino-acid chain: Undecaprenyl phosphate-alpha-4-amino-4-deoxy-L-arabinose arabinosyl transferase 1 (558 aa).

Helical transmembrane passes span 4–24, 87–107, 115–135, 136–156, 178–198, 207–227, 257–277, 295–315, 316–336, 355–375, 383–403, and 411–431; these read GAGL…LVPL, FASV…SWTV, LLAA…TYSV, LDPM…FALR, FMTK…PVAL, LGYG…WALA, APFW…LGLL, FLLL…KGKL, LTYI…YGRE, AFAL…LPWA, WPRI…AAVS, and WALA…IIPQ.

Belongs to the glycosyltransferase 83 family.

The protein localises to the cell inner membrane. The enzyme catalyses 4-amino-4-deoxy-alpha-L-arabinopyranosyl di-trans,octa-cis-undecaprenyl phosphate + lipid IVA = lipid IIA + di-trans,octa-cis-undecaprenyl phosphate.. It participates in lipopolysaccharide metabolism; 4-amino-4-deoxy-beta-L-arabinose-lipid A biosynthesis. In terms of biological role, catalyzes the transfer of the L-Ara4N moiety of the glycolipid undecaprenyl phosphate-alpha-L-Ara4N to lipid A. The modified arabinose is attached to lipid A and is required for resistance to polymyxin and cationic antimicrobial peptides. The sequence is that of Undecaprenyl phosphate-alpha-4-amino-4-deoxy-L-arabinose arabinosyl transferase 1 from Sodalis glossinidius (strain morsitans).